A 100-amino-acid chain; its full sequence is Integration host factor subunit alpha (100 aa).

It belongs to the bacterial histone-like protein family. In terms of assembly, heterodimer of an alpha and a beta chain.

In terms of biological role, this protein is one of the two subunits of integration host factor, a specific DNA-binding protein that functions in genetic recombination as well as in transcriptional and translational control. This is Integration host factor subunit alpha from Jannaschia sp. (strain CCS1).